The following is a 317-amino-acid chain: tRNA-dihydrouridine(20a/20b) synthase [NAD(P)+]-like (317 aa).

FMN-binding positions include 33 to 35 (PMV) and glutamine 87. Residue cysteine 116 is the Proton donor of the active site. FMN is bound by residues lysine 158, histidine 186, 216–218 (NGD), and 240–241 (AR).

The protein belongs to the Dus family. Dus4 subfamily. Requires FMN as cofactor.

It carries out the reaction 5,6-dihydrouridine(20a) in tRNA + NADP(+) = uridine(20a) in tRNA + NADPH + H(+). It catalyses the reaction 5,6-dihydrouridine(20a) in tRNA + NAD(+) = uridine(20a) in tRNA + NADH + H(+). The catalysed reaction is 5,6-dihydrouridine(20b) in tRNA + NAD(+) = uridine(20b) in tRNA + NADH + H(+). The enzyme catalyses 5,6-dihydrouridine(20b) in tRNA + NADP(+) = uridine(20b) in tRNA + NADPH + H(+). Its function is as follows. Catalyzes the synthesis of dihydrouridine, a modified base found in the D-loop of most tRNAs. The sequence is that of tRNA-dihydrouridine(20a/20b) synthase [NAD(P)+]-like (DUS4L) from Homo sapiens (Human).